The sequence spans 677 residues: Methionine--tRNA ligase (677 aa).

The 'HIGH' region signature appears at 15 to 25 (PYANGSIHLGH). Zn(2+)-binding residues include Cys146, Cys149, Cys159, and Cys162. Positions 333–337 (KMSKS) match the 'KMSKS' region motif. Lys336 provides a ligand contact to ATP. The region spanning 576–677 (DFAKIDLRVA…EGAKPGMRVK (102 aa)) is the tRNA-binding domain.

Belongs to the class-I aminoacyl-tRNA synthetase family. MetG type 1 subfamily. As to quaternary structure, homodimer. It depends on Zn(2+) as a cofactor.

Its subcellular location is the cytoplasm. It carries out the reaction tRNA(Met) + L-methionine + ATP = L-methionyl-tRNA(Met) + AMP + diphosphate. In terms of biological role, is required not only for elongation of protein synthesis but also for the initiation of all mRNA translation through initiator tRNA(fMet) aminoacylation. This Aeromonas hydrophila subsp. hydrophila (strain ATCC 7966 / DSM 30187 / BCRC 13018 / CCUG 14551 / JCM 1027 / KCTC 2358 / NCIMB 9240 / NCTC 8049) protein is Methionine--tRNA ligase.